The chain runs to 436 residues: Bifunctional protein GlmU (436 aa).

The tract at residues 1–225 is pyrophosphorylase; sequence MNNNTSIIIL…EQNFMGINDK (225 aa). UDP-N-acetyl-alpha-D-glucosamine contacts are provided by residues 10 to 13, Lys24, Gln76, and 83 to 84; these read LAAG and GT. Mg(2+) is bound at residue Asp104. The UDP-N-acetyl-alpha-D-glucosamine site is built by Gly137, Glu151, Asn166, and Asn223. Asn223 provides a ligand contact to Mg(2+). The segment at 226 to 246 is linker; it reads FQLSIAEKIMQDEIKQNLMKA. Positions 247–436 are N-acetyltransferase; sequence GVLMRMPESI…KFFGKDDVKK (190 aa). Positions 310 and 327 each coordinate UDP-N-acetyl-alpha-D-glucosamine. His338 functions as the Proton acceptor in the catalytic mechanism. UDP-N-acetyl-alpha-D-glucosamine-binding residues include Tyr341 and Asn352. Residues 361–362, Ser380, Ala398, and Arg415 contribute to the acetyl-CoA site; that span reads NY.

It in the N-terminal section; belongs to the N-acetylglucosamine-1-phosphate uridyltransferase family. This sequence in the C-terminal section; belongs to the transferase hexapeptide repeat family. Homotrimer. Mg(2+) serves as cofactor.

Its subcellular location is the cytoplasm. The enzyme catalyses alpha-D-glucosamine 1-phosphate + acetyl-CoA = N-acetyl-alpha-D-glucosamine 1-phosphate + CoA + H(+). It carries out the reaction N-acetyl-alpha-D-glucosamine 1-phosphate + UTP + H(+) = UDP-N-acetyl-alpha-D-glucosamine + diphosphate. It participates in nucleotide-sugar biosynthesis; UDP-N-acetyl-alpha-D-glucosamine biosynthesis; N-acetyl-alpha-D-glucosamine 1-phosphate from alpha-D-glucosamine 6-phosphate (route II): step 2/2. It functions in the pathway nucleotide-sugar biosynthesis; UDP-N-acetyl-alpha-D-glucosamine biosynthesis; UDP-N-acetyl-alpha-D-glucosamine from N-acetyl-alpha-D-glucosamine 1-phosphate: step 1/1. The protein operates within bacterial outer membrane biogenesis; LPS lipid A biosynthesis. Its function is as follows. Catalyzes the last two sequential reactions in the de novo biosynthetic pathway for UDP-N-acetylglucosamine (UDP-GlcNAc). The C-terminal domain catalyzes the transfer of acetyl group from acetyl coenzyme A to glucosamine-1-phosphate (GlcN-1-P) to produce N-acetylglucosamine-1-phosphate (GlcNAc-1-P), which is converted into UDP-GlcNAc by the transfer of uridine 5-monophosphate (from uridine 5-triphosphate), a reaction catalyzed by the N-terminal domain. The chain is Bifunctional protein GlmU from Campylobacter concisus (strain 13826).